A 95-amino-acid chain; its full sequence is UPF0512 protein H (95 aa).

Belongs to the UPF0512 family.

This Dictyostelium discoideum (Social amoeba) protein is UPF0512 protein H.